Consider the following 377-residue polypeptide: MKFASEFRDPALAKGLLAEIARLADQIGATAEKPVHIMEICGGHTHSIFRYGLDKLIHPGIEFIHGPGCPVCVLPRARVDECIEIAGRPEVIFCTFGDAMRVPGSKLSLMQAKAAGADIRMVYSPLDALELARRNPGREVVFFGLGFETTTPSTALAIQQAAREGLANFSVFCNHITVPEPIRALLDDPYMRLDGFIGPGHVSMVIGIHPYDFIAEDYGKPLVVAGFEPTDLLQSVLMVLRQISQGRAAIENQYARVVPEHGNRVSLAAIADVYERRPSFEWRGLGEIDASGLRIRAAYRAHDAEEKFGVGYAGQRAAVEEAEGCACGAVMTGRMKPVACAQFGKGCTPEMPLGALMVSSEGACAAYWQYGGARAAE.

The Fe cation site is built by Cys-41, Cys-69, and Cys-72.

The protein belongs to the HypD family. The cofactor is [4Fe-4S] cluster.

Its pathway is protein modification; [NiFe] hydrogenase maturation. Its function is as follows. Involved in the maturation of [NiFe] hydrogenases. Involved in the biosynthesis of the Fe(CN)(2)CO cofactor. This chain is Hydrogenase maturation factor HypD, found in Rhodobacter capsulatus (Rhodopseudomonas capsulata).